The sequence spans 179 residues: MSPLPDLASVVRTIPDYPKPGVMFRDITTLLGNPQAFRRTVDELVQPWAGAKIDKVAGIEARGFIVGGAVAHQLSAGFVPIRKKGKLPHQTVRMAYALEYGQDEMEMHVDAVHPGERVILVDDLIATGGTAEGAVKLLRQIGAQVEAACFIVDLPDLGGAEKLRAMGVPVRTIMSFSGH.

Belongs to the purine/pyrimidine phosphoribosyltransferase family. In terms of assembly, homodimer.

It localises to the cytoplasm. The catalysed reaction is AMP + diphosphate = 5-phospho-alpha-D-ribose 1-diphosphate + adenine. It participates in purine metabolism; AMP biosynthesis via salvage pathway; AMP from adenine: step 1/1. Its function is as follows. Catalyzes a salvage reaction resulting in the formation of AMP, that is energically less costly than de novo synthesis. This Azorhizobium caulinodans (strain ATCC 43989 / DSM 5975 / JCM 20966 / LMG 6465 / NBRC 14845 / NCIMB 13405 / ORS 571) protein is Adenine phosphoribosyltransferase.